We begin with the raw amino-acid sequence, 546 residues long: Glutamate--tRNA ligase (546 aa).

Residues 41–51 (PSPTGFQHIGG) carry the 'HIGH' region motif. Positions 293-297 (KLSKR) match the 'KMSKS' region motif. Lys-296 provides a ligand contact to ATP.

The protein belongs to the class-I aminoacyl-tRNA synthetase family. Glutamate--tRNA ligase type 1 subfamily. As to quaternary structure, monomer.

The protein resides in the cytoplasm. It catalyses the reaction tRNA(Glu) + L-glutamate + ATP = L-glutamyl-tRNA(Glu) + AMP + diphosphate. Its function is as follows. Catalyzes the attachment of glutamate to tRNA(Glu) in a two-step reaction: glutamate is first activated by ATP to form Glu-AMP and then transferred to the acceptor end of tRNA(Glu). This is Glutamate--tRNA ligase from Clostridium perfringens (strain 13 / Type A).